The following is a 516-amino-acid chain: GMP synthase [glutamine-hydrolyzing] (516 aa).

Residues K8 to L198 enclose the Glutamine amidotransferase type-1 domain. The active-site Nucleophile is C84. Catalysis depends on residues H172 and E174. Positions W199–R391 constitute a GMPS ATP-PPase domain. S226 to S232 lines the ATP pocket.

Homodimer.

It carries out the reaction XMP + L-glutamine + ATP + H2O = GMP + L-glutamate + AMP + diphosphate + 2 H(+). It participates in purine metabolism; GMP biosynthesis; GMP from XMP (L-Gln route): step 1/1. Functionally, catalyzes the synthesis of GMP from XMP. The sequence is that of GMP synthase [glutamine-hydrolyzing] from Francisella tularensis subsp. mediasiatica (strain FSC147).